Reading from the N-terminus, the 146-residue chain is Large ribosomal subunit protein uL15 (146 aa).

The tract at residues 1–54 (MKLHELKPAAGSRKAPKRVGRGTGSGLGRNAGKGEKGQNARSGGGVRPGFEGGQ) is disordered. Composition is skewed to gly residues over residues 21 to 31 (RGTGSGLGRNA) and 42 to 52 (SGGGVRPGFEG).

Belongs to the universal ribosomal protein uL15 family. Part of the 50S ribosomal subunit.

Binds to the 23S rRNA. This Clostridium acetobutylicum (strain ATCC 824 / DSM 792 / JCM 1419 / IAM 19013 / LMG 5710 / NBRC 13948 / NRRL B-527 / VKM B-1787 / 2291 / W) protein is Large ribosomal subunit protein uL15.